Here is a 2611-residue protein sequence, read N- to C-terminus: Highly reducing polyketide synthase ATEG_07659 (2611 aa).

Positions 10–409 constitute a Ketosynthase family 3 (KS3) domain; the sequence is SEPIAIIGLS…GTNSHVIVEG (400 aa). Active-site for beta-ketoacyl synthase activity residues include C157, H292, and H330. Residues 537–844 are malonyl-CoA:ACP transacylase (MAT) domain; it reads MVFTGQGAQW…VRFVEAFTDM (308 aa). An N-terminal hotdog fold region spans residues 969-1109; sequence HDLLGVLVPG…GLITVQMAAD (141 aa). Residues 969–1292 form the PKS/mFAS DH domain; sequence HDLLGVLVPG…CQSLGRSAPG (324 aa). Residues 970 to 1289 form a dehydratase (DH) domain region; it reads DLLGVLVPGT…GLVCQSLGRS (320 aa). Residue H1001 is the Proton acceptor; for dehydratase activity of the active site. The C-terminal hotdog fold stretch occupies residues 1128 to 1292; that stretch reads GYTRRIDPQD…CQSLGRSAPG (165 aa). Catalysis depends on D1199, which acts as the Proton donor; for dehydratase activity. Residues 1469 to 1602 are methyltransferase (CMet) domain; sequence FGQLKSLLAA…GATLLLMETT (134 aa). Residues 1898–2213 are enoyl reductase (ER) domain; sequence GLLDTLAFGD…TGKHLGKLVL (316 aa). The tract at residues 2236–2416 is ketoreductase (KR) domain; that stretch reads ASYLLVGGVG…AVSLDMGVIK (181 aa). Over residues 2499–2509 the composition is skewed to low complexity; sequence SRAQAQQAGGD. A disordered region spans residues 2499-2520; it reads SRAQAQQAGGDSDSEPLSAKLR. The 78-residue stretch at 2527–2604 folds into the Carrier domain; that stretch reads AAARCVGDAI…ALALDVVAKS (78 aa). S2564 bears the O-(pantetheine 4'-phosphoryl)serine mark.

Its pathway is secondary metabolite biosynthesis. In terms of biological role, highly reducing polyketide synthase; part of the cluster B that mediates the biosynthesis of azasperpyranones, members of the azaphilone family that exhibit anti-cancer activities. Azasperpyranones are synthesized by 2 clusters, A and B. Cluster A is responsible for the production of the polyhydric phenol moiety while the azaphilonoid scaffold is produced by the cluster B. The non-reducing polyketide synthase ATEG_03629 produces 5-methyl orsellinic acid, which is then reduced to 5-methyl orsellinic aldehyde by the NRPS-like protein ATEG_03630. 5-methyl orsellinic aldehyde is then first hydroxylated by the FAD-dependent monooxygenase ATEG_03635 and subsequently hydroxylated by the cytochrome P450 monooxygenase ATEG_03631 to produce the unstable polyhydric phenol precursor of azasperpyranones. On the other hand, the polyketide synthase ATEG_07659 is responsible for producing the 3,5-dimethyloctadienone moiety from acetyl-CoA, three malonyl-CoA, and two S-adenosyl methionines (SAM). The 3,5-dimethyloctadienone moiety is then loaded onto the SAT domain of ATEG_07661 and extended with four malonyl-CoA and one SAM, which leads to the formation of 2,4-dihydroxy-6-(5,7-dimethyl-2-oxo-trans-3-trans-5-nonadienyl)-3-methylbenzaldehyde (compound 8) after reductive release and aldol condensation. The FAD-dependent monooxygenase ATEG_07662 is the next enzyme in the biosynthesis sequence and hydroxylates the side chain at the benzylic position of compound 8. In Aspergillus nidulans, afoF, the ortholog of the FAD-dependent oxygenase ATEG_07660, is the key enzyme for the biosynthesis of asperfuranone by catalyzing the hydroxylation at C-8 of to prevent the formation of a six-membered ring hemiacetal intermediate and thus facilitating the formation of a five-membered ring to produce asperfuranone. In Aspergillus terreus, ATEG_07660 is probably not functional, which leads to the formation of the six-membered ring hemiacetal intermediate presperpyranone instead of asperfuranone. Finally, ATEG_03636 is involved in the condensation of the polyhydric phenol moiety produced by cluster A and the perasperpyranone precursor produced by cluster B, to yield azasperpyranone A. Further modifications of azasperpyranone A result in the production of derivatives, including azasperpyranone B to F. This Aspergillus terreus (strain NIH 2624 / FGSC A1156) protein is Highly reducing polyketide synthase ATEG_07659.